The following is a 333-amino-acid chain: Glycerol-3-phosphate dehydrogenase [NAD(P)+] (333 aa).

Positions 16, 36, and 109 each coordinate NADPH. Sn-glycerol 3-phosphate contacts are provided by Lys-109, Gly-137, and Ser-139. Ala-141 lines the NADPH pocket. Lys-192, Asp-245, Ser-255, Arg-256, and Asn-257 together coordinate sn-glycerol 3-phosphate. The Proton acceptor role is filled by Lys-192. Arg-256 provides a ligand contact to NADPH. NADPH is bound by residues Val-280 and Glu-282.

Belongs to the NAD-dependent glycerol-3-phosphate dehydrogenase family.

The protein resides in the cytoplasm. It carries out the reaction sn-glycerol 3-phosphate + NAD(+) = dihydroxyacetone phosphate + NADH + H(+). The catalysed reaction is sn-glycerol 3-phosphate + NADP(+) = dihydroxyacetone phosphate + NADPH + H(+). Its pathway is membrane lipid metabolism; glycerophospholipid metabolism. Catalyzes the reduction of the glycolytic intermediate dihydroxyacetone phosphate (DHAP) to sn-glycerol 3-phosphate (G3P), the key precursor for phospholipid synthesis. This chain is Glycerol-3-phosphate dehydrogenase [NAD(P)+], found in Parvibaculum lavamentivorans (strain DS-1 / DSM 13023 / NCIMB 13966).